Here is a 431-residue protein sequence, read N- to C-terminus: Glutamate-1-semialdehyde 2,1-aminomutase (431 aa).

The residue at position 269 (Lys-269) is an N6-(pyridoxal phosphate)lysine.

The protein belongs to the class-III pyridoxal-phosphate-dependent aminotransferase family. HemL subfamily. In terms of assembly, homodimer. It depends on pyridoxal 5'-phosphate as a cofactor.

The protein resides in the cytoplasm. The enzyme catalyses (S)-4-amino-5-oxopentanoate = 5-aminolevulinate. Its pathway is porphyrin-containing compound metabolism; protoporphyrin-IX biosynthesis; 5-aminolevulinate from L-glutamyl-tRNA(Glu): step 2/2. This is Glutamate-1-semialdehyde 2,1-aminomutase from Francisella tularensis subsp. holarctica (strain FTNF002-00 / FTA).